A 1109-amino-acid chain; its full sequence is Carbamoyl phosphate synthase large chain (1109 aa).

The carboxyphosphate synthetic domain stretch occupies residues 1–402; the sequence is MPKRTDLKSV…ALQKALRSLE (402 aa). Residues arginine 129, arginine 169, glycine 175, glycine 176, glutamate 208, isoleucine 210, glutamate 215, glycine 241, valine 242, histidine 243, glutamine 285, and glutamate 299 each contribute to the ATP site. The ATP-grasp 1 domain occupies 133 to 328; it reads KGVVERCGAE…IAKIATKLSL (196 aa). Mg(2+) is bound by residues glutamine 285, glutamate 299, and asparagine 301. Mn(2+)-binding residues include glutamine 285, glutamate 299, and asparagine 301. Positions 403-546 are oligomerization domain; that stretch reads QKGSQLDFSS…YHYSAYDEED (144 aa). Residues 547–950 form a carbamoyl phosphate synthetic domain region; it reads EVALHSKPSI…AFAKSQAGAN (404 aa). The ATP-grasp 2 domain maps to 677–868; it reads SRVLDKAGLV…MAKAAALIGT (192 aa). 10 residues coordinate ATP: arginine 713, arginine 752, leucine 754, glutamate 759, glycine 784, isoleucine 785, histidine 786, serine 787, glutamine 827, and glutamate 839. Residues glutamine 827, glutamate 839, and asparagine 841 each coordinate Mg(2+). Mn(2+)-binding residues include glutamine 827, glutamate 839, and asparagine 841. The MGS-like domain maps to 951–1096; the sequence is NALPTEGKVF…QEHAAALGES (146 aa). An allosteric domain region spans residues 951–1109; that stretch reads NALPTEGKVF…AAAKADLQHA (159 aa).

It belongs to the CarB family. In terms of assembly, composed of two chains; the small (or glutamine) chain promotes the hydrolysis of glutamine to ammonia, which is used by the large (or ammonia) chain to synthesize carbamoyl phosphate. Tetramer of heterodimers (alpha,beta)4. Requires Mg(2+) as cofactor. The cofactor is Mn(2+).

The enzyme catalyses hydrogencarbonate + L-glutamine + 2 ATP + H2O = carbamoyl phosphate + L-glutamate + 2 ADP + phosphate + 2 H(+). It catalyses the reaction hydrogencarbonate + NH4(+) + 2 ATP = carbamoyl phosphate + 2 ADP + phosphate + 2 H(+). It functions in the pathway amino-acid biosynthesis; L-arginine biosynthesis; carbamoyl phosphate from bicarbonate: step 1/1. The protein operates within pyrimidine metabolism; UMP biosynthesis via de novo pathway; (S)-dihydroorotate from bicarbonate: step 1/3. Functionally, large subunit of the glutamine-dependent carbamoyl phosphate synthetase (CPSase). CPSase catalyzes the formation of carbamoyl phosphate from the ammonia moiety of glutamine, carbonate, and phosphate donated by ATP, constituting the first step of 2 biosynthetic pathways, one leading to arginine and/or urea and the other to pyrimidine nucleotides. The large subunit (synthetase) binds the substrates ammonia (free or transferred from glutamine from the small subunit), hydrogencarbonate and ATP and carries out an ATP-coupled ligase reaction, activating hydrogencarbonate by forming carboxy phosphate which reacts with ammonia to form carbamoyl phosphate. The chain is Carbamoyl phosphate synthase large chain from Pseudarthrobacter chlorophenolicus (strain ATCC 700700 / DSM 12829 / CIP 107037 / JCM 12360 / KCTC 9906 / NCIMB 13794 / A6) (Arthrobacter chlorophenolicus).